The following is a 511-amino-acid chain: Trigger factor (511 aa).

In terms of domain architecture, PPIase FKBP-type spans 168-253; that stretch reads GDLLTIDFVG…VKEVKAPAEV (86 aa). Residues 446 to 511 form a disordered region; that stretch reads DEHEHHHHDH…KAPAKKKKED (66 aa). Residues 455–478 are compositionally biased toward basic and acidic residues; sequence HDHDHDHDHDHDHGHDHDHGDEKP. The segment covering 479 to 488 has biased composition (basic residues); the sequence is KKKPAAKKAA. Over residues 489–498 the composition is skewed to basic and acidic residues; sequence AKSDDGEAKP. Over residues 499–511 the composition is skewed to basic residues; the sequence is AAKKAPAKKKKED.

Belongs to the FKBP-type PPIase family. Tig subfamily.

The protein resides in the cytoplasm. It carries out the reaction [protein]-peptidylproline (omega=180) = [protein]-peptidylproline (omega=0). In terms of biological role, involved in protein export. Acts as a chaperone by maintaining the newly synthesized protein in an open conformation. Functions as a peptidyl-prolyl cis-trans isomerase. This Parvibaculum lavamentivorans (strain DS-1 / DSM 13023 / NCIMB 13966) protein is Trigger factor.